Reading from the N-terminus, the 596-residue chain is Interleukin-1 receptor-associated kinase 3 (596 aa).

One can recognise a Death domain in the interval 41–106; that stretch reads WRGLAERLSS…RAIHLITNYG (66 aa). Residue Ser-110 is modified to Phosphoserine; by IRAK1. The 288-residue stretch at 165–452 folds into the Protein kinase domain; the sequence is FHKDFLIGEG…LESTQASLYF (288 aa). ATP is bound by residues 171–179, Lys-192, 295–298, and Asp-311; these read IGEGEIFEV and SSAN. Phosphoserine is present on Ser-467. The disordered stretch occupies residues 560–596; sequence NIDPSSEAPGHSCRSRPVESSCSSKFSWDEYEQYKKE.

Belongs to the protein kinase superfamily. TKL Ser/Thr protein kinase family. Pelle subfamily. In terms of assembly, monomer. Homodimer; disulfide-linked. May interact with IRAK4 (when phosphorylated). Interacts (when phosphorylated at Ser-110) with PIN1 (via WW domain) in response to IL33-mediated (but not TLR4 ligand LPS) dendritic cell stimulation. In terms of tissue distribution, expressed in eosinophils, dendritic cells and/or monocytes (at protein level). Expressed predominantly in peripheral blood lymphocytes.

The protein localises to the cytoplasm. The protein resides in the nucleus. In terms of biological role, putative inactive protein kinase which regulates signaling downstream of immune receptors including IL1R and Toll-like receptors. Inhibits dissociation of IRAK1 and IRAK4 from the Toll-like receptor signaling complex by either inhibiting the phosphorylation of IRAK1 and IRAK4 or stabilizing the receptor complex. Upon IL33-induced lung inflammation, positively regulates expression of IL6, CSF3, CXCL2 and CCL5 mRNAs in dendritic cells. This Homo sapiens (Human) protein is Interleukin-1 receptor-associated kinase 3.